A 415-amino-acid chain; its full sequence is Serine hydroxymethyltransferase (415 aa).

Residues leucine 117 and 121–123 (GHL) contribute to the (6S)-5,6,7,8-tetrahydrofolate site. Lysine 226 bears the N6-(pyridoxal phosphate)lysine mark. (6S)-5,6,7,8-tetrahydrofolate contacts are provided by residues glutamate 241 and 349 to 351 (SPF).

It belongs to the SHMT family. As to quaternary structure, homodimer. It depends on pyridoxal 5'-phosphate as a cofactor.

Its subcellular location is the cytoplasm. The enzyme catalyses (6R)-5,10-methylene-5,6,7,8-tetrahydrofolate + glycine + H2O = (6S)-5,6,7,8-tetrahydrofolate + L-serine. It participates in one-carbon metabolism; tetrahydrofolate interconversion. The protein operates within amino-acid biosynthesis; glycine biosynthesis; glycine from L-serine: step 1/1. Its function is as follows. Catalyzes the reversible interconversion of serine and glycine with tetrahydrofolate (THF) serving as the one-carbon carrier. This reaction serves as the major source of one-carbon groups required for the biosynthesis of purines, thymidylate, methionine, and other important biomolecules. Also exhibits THF-independent aldolase activity toward beta-hydroxyamino acids, producing glycine and aldehydes, via a retro-aldol mechanism. The protein is Serine hydroxymethyltransferase of Trichlorobacter lovleyi (strain ATCC BAA-1151 / DSM 17278 / SZ) (Geobacter lovleyi).